The following is a 293-amino-acid chain: Deubiquitinase OTUD6B (293 aa).

Met1 carries the post-translational modification N-acetylmethionine. The region spanning 147-284 (LEIKQIPSDG…GEHYNSVTRL (138 aa)) is the OTU domain. The tract at residues 152 to 158 (IPSDGHC) is cys-loop. The active site involves Asp155. Cys158 serves as the catalytic Nucleophile. The tract at residues 219–229 (IVNTAAWGGQL) is variable-loop. A his-loop region spans residues 267–277 (YMRHAYGLGEH). His277 is an active-site residue.

In terms of assembly, interacts with the eukaryotic translation initiation factor 4F complex.

It carries out the reaction Thiol-dependent hydrolysis of ester, thioester, amide, peptide and isopeptide bonds formed by the C-terminal Gly of ubiquitin (a 76-residue protein attached to proteins as an intracellular targeting signal).. Functionally, deubiquitinating enzyme that may play a role in the ubiquitin-dependent regulation of protein synthesis, downstream of mTORC1. May associate with the protein synthesis initiation complex and modify its ubiquitination to repress translation. May also repress DNA synthesis and modify different cellular targets thereby regulating cell growth and proliferation. May also play a role in proteasome assembly and function. Its function is as follows. Stimulates protein synthesis. Influences the expression of CCND1/cyclin D1 by promoting its translation and regulates MYC/c-Myc protein stability. This chain is Deubiquitinase OTUD6B, found in Homo sapiens (Human).